Consider the following 780-residue polypeptide: Striatin (780 aa).

Residues 53 to 120 (LHFLQHEWAR…QERAKYHKLK (68 aa)) adopt a coiled-coil conformation. Residues 55–63 (FLQHEWARF) form a caveolin-binding region. The tract at residues 124 to 145 (ELNQGDMKPPSYDSDEGNETEV) is disordered. Ser137 carries the post-translational modification Phosphoserine. Residues 149–166 (QNSQFMWKQGRQLLRQYL) form a calmodulin-binding region. Phosphothreonine is present on Thr225. Phosphoserine is present on residues Ser227, Ser229, Ser245, and Ser259. 3 disordered regions span residues 290 to 321 (FLVA…TPER), 334 to 353 (EQYK…NRSK), and 363 to 388 (DVDE…LPEQ). Basic and acidic residues predominate over residues 299-315 (NESRSAGDGTDWEKEDQ). Basic residues predominate over residues 338 to 351 (KERKGKKGVKRPNR). WD repeat units lie at residues 461-500 (SHFD…PAKK), 514-553 (AHKG…VDPY), 567-606 (GHTD…PALT), 662-701 (SSSC…LIHS), 704-743 (AHLE…CIQE), and 750-780 (KFEE…KVFV).

It belongs to the WD repeat striatin family. Part of the core of STRIPAK complexes composed of PP2A catalytic and scaffolding subunits, the striatins (PP2A regulatory subunits), the striatin-associated proteins MOB4, STRIP1 and STRIP2, PDCD10 and members of the STE20 kinases, such as STK24 and STK26. Interacts with CTTNBP2; this interaction may regulate dendritic spine distribution of STRN. Activation of glutamate receptors weakens the interaction with CTTNBP2. Mainly expressed in the central nervous system. Mostly confined in dendrites, not in axons, and is most abundant in dendritic spines.

Its subcellular location is the cytoplasm. It is found in the membrane. It localises to the cell projection. The protein localises to the dendritic spine. Calmodulin-binding scaffolding protein which is the center of the striatin-interacting phosphatase and kinase (STRIPAK) complexes. STRIPAK complexes have critical roles in protein (de)phosphorylation and are regulators of multiple signaling pathways including Hippo, MAPK, nuclear receptor and cytoskeleton remodeling. Different types of STRIPAK complexes are involved in a variety of biological processes such as cell growth, differentiation, apoptosis, metabolism and immune regulation. In Rattus norvegicus (Rat), this protein is Striatin (Strn).